A 232-amino-acid polypeptide reads, in one-letter code: Enolase-phosphatase E1 (232 aa).

Belongs to the HAD-like hydrolase superfamily. MasA/MtnC family. As to quaternary structure, monomer. It depends on Mg(2+) as a cofactor.

It carries out the reaction 5-methylsulfanyl-2,3-dioxopentyl phosphate + H2O = 1,2-dihydroxy-5-(methylsulfanyl)pent-1-en-3-one + phosphate. The protein operates within amino-acid biosynthesis; L-methionine biosynthesis via salvage pathway; L-methionine from S-methyl-5-thio-alpha-D-ribose 1-phosphate: step 3/6. It functions in the pathway amino-acid biosynthesis; L-methionine biosynthesis via salvage pathway; L-methionine from S-methyl-5-thio-alpha-D-ribose 1-phosphate: step 4/6. In terms of biological role, bifunctional enzyme that catalyzes the enolization of 2,3-diketo-5-methylthiopentyl-1-phosphate (DK-MTP-1-P) into the intermediate 2-hydroxy-3-keto-5-methylthiopentenyl-1-phosphate (HK-MTPenyl-1-P), which is then dephosphorylated to form the acireductone 1,2-dihydroxy-3-keto-5-methylthiopentene (DHK-MTPene). This is Enolase-phosphatase E1 from Xylella fastidiosa (strain M12).